The following is a 218-amino-acid chain: N-(5'-phosphoribosyl)anthranilate isomerase (218 aa).

The protein belongs to the TrpF family.

The catalysed reaction is N-(5-phospho-beta-D-ribosyl)anthranilate = 1-(2-carboxyphenylamino)-1-deoxy-D-ribulose 5-phosphate. It functions in the pathway amino-acid biosynthesis; L-tryptophan biosynthesis; L-tryptophan from chorismate: step 3/5. This chain is N-(5'-phosphoribosyl)anthranilate isomerase, found in Bordetella parapertussis (strain 12822 / ATCC BAA-587 / NCTC 13253).